The sequence spans 257 residues: Imidazole glycerol phosphate synthase subunit HisF (257 aa).

Active-site residues include aspartate 12 and aspartate 131.

The protein belongs to the HisA/HisF family. As to quaternary structure, heterodimer of HisH and HisF.

The protein localises to the cytoplasm. It carries out the reaction 5-[(5-phospho-1-deoxy-D-ribulos-1-ylimino)methylamino]-1-(5-phospho-beta-D-ribosyl)imidazole-4-carboxamide + L-glutamine = D-erythro-1-(imidazol-4-yl)glycerol 3-phosphate + 5-amino-1-(5-phospho-beta-D-ribosyl)imidazole-4-carboxamide + L-glutamate + H(+). It participates in amino-acid biosynthesis; L-histidine biosynthesis; L-histidine from 5-phospho-alpha-D-ribose 1-diphosphate: step 5/9. Functionally, IGPS catalyzes the conversion of PRFAR and glutamine to IGP, AICAR and glutamate. The HisF subunit catalyzes the cyclization activity that produces IGP and AICAR from PRFAR using the ammonia provided by the HisH subunit. The sequence is that of Imidazole glycerol phosphate synthase subunit HisF from Marinomonas sp. (strain MWYL1).